Consider the following 235-residue polypeptide: Cytidylate kinase (235 aa).

Residue Gly16 to Thr24 coordinates ATP.

This sequence belongs to the cytidylate kinase family. Type 1 subfamily.

The protein localises to the cytoplasm. The catalysed reaction is CMP + ATP = CDP + ADP. It catalyses the reaction dCMP + ATP = dCDP + ADP. The protein is Cytidylate kinase of Chloroherpeton thalassium (strain ATCC 35110 / GB-78).